A 165-amino-acid polypeptide reads, in one-letter code: RxLR effector protein PITG_09218 (165 aa).

The N-terminal stretch at 1–24 (MRFSAFLTLLLVAFVASCSTFASA) is a signal peptide. The short motif at 31–57 (RRLRADAAPVPVNKDNVAKLAGGFLEK) is the RxLR-dEER element. The helical transmembrane segment at 129–149 (VTLGATVAGFAIYGAYKALFD) threads the bilayer.

Belongs to the RxLR effector family.

It is found in the secreted. The protein localises to the host mitochondrion membrane. The protein resides in the host endoplasmic reticulum membrane. In terms of biological role, effector that enhances P.infestans colonization of Nicotiana benthamiana leaves. The chain is RxLR effector protein PITG_09218 from Phytophthora infestans (strain T30-4) (Potato late blight agent).